Reading from the N-terminus, the 1025-residue chain is Multidrug resistance protein MdtC (1025 aa).

The next 12 helical transmembrane spans lie at 3 to 23, 333 to 353, 360 to 380, 387 to 407, 431 to 451, 463 to 483, 528 to 548, 853 to 873, 875 to 895, 897 to 917, 953 to 973, and 984 to 1004; these read FFAL…AITL, EVEQ…FLFL, IIPA…MYLC, LSLM…IVVL, VGFT…PLLL, FAVT…TLTP, LVGV…ISIP, VILI…LYES, VHPL…LLAL, LFNA…IGIV, PIMM…LSGG, and ITIV…TPVV.

Belongs to the resistance-nodulation-cell division (RND) (TC 2.A.6) family. MdtC subfamily. Part of a tripartite efflux system composed of MdtA, MdtB and MdtC. MdtC forms a heteromultimer with MdtB.

It is found in the cell inner membrane. In terms of biological role, the MdtABC tripartite complex confers resistance against novobiocin and deoxycholate. The protein is Multidrug resistance protein MdtC of Escherichia coli O8 (strain IAI1).